The primary structure comprises 288 residues: Nucleotide-binding protein AHA_3920 (288 aa).

8-15 (GRSGSGKT) contacts ATP. A GTP-binding site is contributed by 56-59 (DVRN).

Belongs to the RapZ-like family.

In terms of biological role, displays ATPase and GTPase activities. The protein is Nucleotide-binding protein AHA_3920 of Aeromonas hydrophila subsp. hydrophila (strain ATCC 7966 / DSM 30187 / BCRC 13018 / CCUG 14551 / JCM 1027 / KCTC 2358 / NCIMB 9240 / NCTC 8049).